Reading from the N-terminus, the 669-residue chain is Translation factor GUF1, mitochondrial (669 aa).

The transit peptide at 1–49 (MWTLAGQGWWRGRALAAWVTEAARKGLLWPHLAPARGTAAESRAPDRCY) directs the protein to the mitochondrion. The region spanning 66-247 (ENTRNFSIIA…AVIKRIPFPK (182 aa)) is the tr-type G domain. GTP is bound by residues 75–82 (AHVDHGKS), 140–144 (DTPGH), and 194–197 (NKID).

This sequence belongs to the TRAFAC class translation factor GTPase superfamily. Classic translation factor GTPase family. LepA subfamily.

Its subcellular location is the mitochondrion inner membrane. The enzyme catalyses GTP + H2O = GDP + phosphate + H(+). Its function is as follows. Promotes mitochondrial protein synthesis. May act as a fidelity factor of the translation reaction, by catalyzing a one-codon backward translocation of tRNAs on improperly translocated ribosomes. Binds to mitochondrial ribosomes in a GTP-dependent manner. The chain is Translation factor GUF1, mitochondrial from Bos taurus (Bovine).